A 189-amino-acid chain; its full sequence is Ribose 1,5-bisphosphate phosphokinase PhnN (189 aa).

G10–D17 contacts ATP.

This sequence belongs to the ribose 1,5-bisphosphokinase family.

It carries out the reaction alpha-D-ribose 1,5-bisphosphate + ATP = 5-phospho-alpha-D-ribose 1-diphosphate + ADP. It functions in the pathway metabolic intermediate biosynthesis; 5-phospho-alpha-D-ribose 1-diphosphate biosynthesis; 5-phospho-alpha-D-ribose 1-diphosphate from D-ribose 5-phosphate (route II): step 3/3. Catalyzes the phosphorylation of ribose 1,5-bisphosphate to 5-phospho-D-ribosyl alpha-1-diphosphate (PRPP). The chain is Ribose 1,5-bisphosphate phosphokinase PhnN from Enterobacter lignolyticus (strain SCF1).